Reading from the N-terminus, the 347-residue chain is Doublecortin domain-containing protein 2C (347 aa).

Doublecortin domains lie at 16-98 (KTIL…LDYI) and 136-217 (RYIN…IPYW). Residues 235–260 (KYTQTKKRVESKVKEPLQNDSVPPRS) are disordered. Basic and acidic residues predominate over residues 241 to 251 (KRVESKVKEPL).

The protein localises to the cell projection. It is found in the cilium. It localises to the flagellum. The protein resides in the cytoplasm. The chain is Doublecortin domain-containing protein 2C from Mus musculus (Mouse).